A 65-amino-acid chain; its full sequence is Large ribosomal subunit protein bL35 (65 aa).

The protein belongs to the bacterial ribosomal protein bL35 family.

This Phytoplasma mali (strain AT) protein is Large ribosomal subunit protein bL35.